Consider the following 352-residue polypeptide: Phosphoribosylformylglycinamidine cyclo-ligase (352 aa).

The protein belongs to the AIR synthase family.

The protein resides in the cytoplasm. It catalyses the reaction 2-formamido-N(1)-(5-O-phospho-beta-D-ribosyl)acetamidine + ATP = 5-amino-1-(5-phospho-beta-D-ribosyl)imidazole + ADP + phosphate + H(+). Its pathway is purine metabolism; IMP biosynthesis via de novo pathway; 5-amino-1-(5-phospho-D-ribosyl)imidazole from N(2)-formyl-N(1)-(5-phospho-D-ribosyl)glycinamide: step 2/2. In Pseudomonas savastanoi pv. phaseolicola (strain 1448A / Race 6) (Pseudomonas syringae pv. phaseolicola (strain 1448A / Race 6)), this protein is Phosphoribosylformylglycinamidine cyclo-ligase.